The chain runs to 150 residues: Mating pheromone 1 (150 aa).

A signal peptide spans 1-16; sequence MKAIFIILAILMVTQA. Positions 17–52 are excised as a propeptide; the sequence is FKMTSKVNTKLQSQIQSKFQSKNKLASTFQTSSKLK.

It localises to the secreted. Functionally, mating ciliate pheromones (or gamones) are diffusible extracellular communication signals that distinguish different intraspecific classes of cells commonly referred to as 'mating types'. They prepare the latter for conjugation by changing their cell surface properties. The protein is Mating pheromone 1 of Euplotoides octocarinatus (Freshwater ciliate).